The primary structure comprises 138 residues: Large ribosomal subunit protein uL16 (138 aa).

It belongs to the universal ribosomal protein uL16 family. Part of the 50S ribosomal subunit.

Its function is as follows. Binds 23S rRNA and is also seen to make contacts with the A and possibly P site tRNAs. In Chlamydia felis (strain Fe/C-56) (Chlamydophila felis), this protein is Large ribosomal subunit protein uL16.